The sequence spans 98 residues: YcgL domain-containing protein Ping_1076 (98 aa).

Residues 1-85 (MLCAVYKSIR…PPVNHLQEHK (85 aa)) enclose the YcgL domain. Residues 75–98 (PPPVNHLQEHKDWKKKRQENKNEI) are disordered.

The polypeptide is YcgL domain-containing protein Ping_1076 (Psychromonas ingrahamii (strain DSM 17664 / CCUG 51855 / 37)).